The sequence spans 394 residues: Phosphoglycerate kinase (394 aa).

Substrate is bound by residues 21 to 23 (DFN), Arg-36, 59 to 62 (HFGR), Arg-118, and Arg-151. Residues Lys-201, Glu-323, and 349–352 (GGDS) contribute to the ATP site.

The protein belongs to the phosphoglycerate kinase family. In terms of assembly, monomer.

Its subcellular location is the cytoplasm. The enzyme catalyses (2R)-3-phosphoglycerate + ATP = (2R)-3-phospho-glyceroyl phosphate + ADP. It functions in the pathway carbohydrate degradation; glycolysis; pyruvate from D-glyceraldehyde 3-phosphate: step 2/5. The protein is Phosphoglycerate kinase of Brevibacillus brevis (strain 47 / JCM 6285 / NBRC 100599).